A 77-amino-acid polypeptide reads, in one-letter code: Pollen allergen Amb p 5a (77 aa).

A signal peptide spans 1 to 22 (MNNEKNVSFEFIGSTDEVDEIK). 4 cysteine pairs are disulfide-bonded: Cys-26/Cys-61, Cys-33/Cys-48, Cys-40/Cys-54, and Cys-41/Cys-65.

The chain is Pollen allergen Amb p 5a from Ambrosia psilostachya (Western ragweed).